The sequence spans 493 residues: NADH-ubiquinone oxidoreductase 51 kDa subunit, mitochondrial (493 aa).

The N-terminal 27 residues, 1-27, are a transit peptide targeting the mitochondrion; the sequence is MLSRTAAPTKASARTLSRAAAEQCRTF. NAD(+) is bound at residue 96 to 105; the sequence is GRGGAGFPSG. Residue 212 to 259 coordinates FMN; that stretch reads GAGAYVCGEETSLIESLEGKPGKPRLKPPFPAAVGLFGCPSTVANVET. [4Fe-4S] cluster-binding residues include Cys-391, Cys-394, Cys-397, and Cys-437.

It belongs to the complex I 51 kDa subunit family. As to quaternary structure, complex I is composed of about 40 different subunits. This is a component of the flavoprotein-sulfur (FP) fragment of the enzyme. FMN serves as cofactor. It depends on [4Fe-4S] cluster as a cofactor.

The protein localises to the mitochondrion inner membrane. The catalysed reaction is a ubiquinone + NADH + 5 H(+)(in) = a ubiquinol + NAD(+) + 4 H(+)(out). Core subunit of the mitochondrial membrane respiratory chain NADH dehydrogenase (Complex I) that is believed to belong to the minimal assembly required for catalysis. Complex I functions in the transfer of electrons from NADH to the respiratory chain. The immediate electron acceptor for the enzyme is believed to be ubiquinone. The protein is NADH-ubiquinone oxidoreductase 51 kDa subunit, mitochondrial (nuo-51) of Neurospora crassa (strain ATCC 24698 / 74-OR23-1A / CBS 708.71 / DSM 1257 / FGSC 987).